The primary structure comprises 339 residues: AB hydrolase superfamily protein B1A11.02 (339 aa).

The protein belongs to the AB hydrolase superfamily.

In Schizosaccharomyces pombe (strain 972 / ATCC 24843) (Fission yeast), this protein is AB hydrolase superfamily protein B1A11.02.